The primary structure comprises 425 residues: Orexin/Hypocretin receptor type 1 (425 aa).

Residues 1–25 (MEPSATPGPQMGVPTEGRERSPEPP) are disordered. The Extracellular segment spans residues 1-46 (MEPSATPGPQMGVPTEGRERSPEPPDYEDEFLRYLWRDYLYPKQYE). The segment at 26–41 (DYEDEFLRYLWRDYLY) is required for response to orexin-A. The helical transmembrane segment at 47–67 (WVLIAAYVAVFFVALVGNTLV) threads the bilayer. Over 68–82 (CLAVWRNHHMRTVTN) the chain is Cytoplasmic. Residues 83–105 (YFIVNLSLADVLVTAICLPASLL) form a helical membrane-spanning segment. Topologically, residues 106–119 (VDITESWLFGHALC) are extracellular. A disulfide bond links C119 and C202. Residues 120–140 (KVIPYLQAVSVSVAVLTLSFI) traverse the membrane as a helical segment. Topologically, residues 141–160 (ALDRWYAICHPLLFKSTARR) are cytoplasmic. A helical membrane pass occupies residues 161 to 182 (ARGSILGIWAVSLAVMVPQAAV). Residues 183–213 (MECSSVLPELANRTRLFSVCDERWADDLYPK) are Extracellular-facing. The N-linked (GlcNAc...) asparagine glycan is linked to N194. Residues 214–235 (IYHSCFFIVTYLAPLGLMAMAY) form a helical membrane-spanning segment. The Cytoplasmic portion of the chain corresponds to 236-298 (FQIFRKLWGR…QMRARRKTAK (63 aa)). Residues 299-321 (MLMVVLLVFALCYLPISVLNVLK) traverse the membrane as a helical segment. Residues 322-336 (RVFGMFRQASDREAV) are Extracellular-facing. A helical membrane pass occupies residues 337–360 (YACFTFSHWLVYANSAANPIIYNF). Residues 361 to 425 (LSGKFREQFK…LLTSVTTVLP (65 aa)) are Cytoplasmic-facing.

The protein belongs to the G-protein coupled receptor 1 family.

The protein localises to the cell membrane. Its function is as follows. Moderately selective excitatory receptor for orexin-A and, with a lower affinity, for orexin-B neuropeptide. Triggers an increase in cytoplasmic Ca(2+) levels in response to orexin-A binding. This is Orexin/Hypocretin receptor type 1 from Bos taurus (Bovine).